Here is a 340-residue protein sequence, read N- to C-terminus: CRISPR system Cmr subunit Cmr6 (340 aa).

This sequence belongs to the CRISPR system Cmr6 family. As to quaternary structure, part of the type III-B Cmr ribonucleoprotein (RNP) complex, an elongated RNP with Cmr2 and Cmr3 as the base, with Cmr4 and Cmr5 forming a helical core along the mature crRNA (39 or 45 nt in length), while the complex is capped by Cmr6 and Cmr1. The 5' end of the crRNA is bound to Cmr2 and Cmr3, while Cmr6 and a Cmr1 subunit (Cmr1-1 or Cmr1-2) cap the 3' end of the crRNA. The target RNA lies antiparallel to the crRNA, with its 5' end near Cmr1 and Cmr6 and its 3' end near Cmr2 and Cmr3; major target cleavage occurs nears the junction of Cmr1/Cmr6 and Cmr4/Cmr, with minor cleavage occurring at 6 nt intervals which coincide with the proposed spacing of Cmr4 subunits. Interacts with Cmr4 and Cmr5.

It localises to the cytoplasm. In terms of biological role, CRISPR (clustered regularly interspaced short palindromic repeat), is an adaptive immune system that provides protection against mobile genetic elements (viruses, transposable elements and conjugative plasmids). CRISPR clusters contain sequences complementary to antecedent mobile elements and target invading nucleic acids. CRISPR clusters are transcribed and processed into CRISPR RNA (crRNA), formerly called psiRNA (prokaryotic silencing) in this organism. Part of the Cmr ribonucleoprotein complex which has divalent cation-dependent endoribonuclease activity specific for ssRNA complementary to the crRNA (target RNA), generating 5' hydroxy- and 3' phosphate or 2'-3' cyclic phosphate termini. Cmr4 is probably the subunit that cleaves target RNA. Cmr complex does not cleave ssDNA complementary to the crRNA. Cleavage of invading RNA is guided by the crRNA; substrate cleavage occurs a fixed distance (14 nt) from the 3' end of the crRNA. In vitro reconstitution shows Cmr1-2 and Cmr5 are not absolutely necessary for target cleavage. The protein is CRISPR system Cmr subunit Cmr6 of Pyrococcus furiosus (strain ATCC 43587 / DSM 3638 / JCM 8422 / Vc1).